The primary structure comprises 582 residues: PTS system lactose-specific EIICB component (582 aa).

The PTS EIIC type-3 domain maps to 8–409 (IEKGKPFFEK…VVDVIIYYPF (402 aa)). 9 helical membrane passes run 30–50 (GFIA…ITYV), 64–84 (GILM…VAGT), 103–123 (INFI…AADP), 137–157 (KGLL…NFFV), 176–196 (VFKD…LDLL), 222–242 (GWIG…VGIH), 283–303 (FVAT…FMWL), 339–359 (VFFI…KFFV), and 381–401 (IVMG…LIVV). The tract at residues 453-473 (ASEADTDDTSSVDETTSTSST) is disordered. Positions 464–473 (VDETTSTSST) are enriched in low complexity. The PTS EIIB type-3 domain maps to 479-582 (QTNVLVLCAG…LEFVKQQFNN (104 aa)). Catalysis depends on C486, which acts as the Phosphocysteine intermediate; for EIIB activity. C486 is modified (phosphocysteine; by EIIA).

The protein resides in the cell membrane. The enzyme catalyses lactose(out) + N(pros)-phospho-L-histidyl-[protein] = lactose 6-phosphate(in) + L-histidyl-[protein]. Functionally, the phosphoenolpyruvate-dependent sugar phosphotransferase system (sugar PTS), a major carbohydrate active transport system, catalyzes the phosphorylation of incoming sugar substrates concomitantly with their translocation across the cell membrane. The enzyme II LacEF PTS system is involved in lactose transport. The protein is PTS system lactose-specific EIICB component of Staphylococcus epidermidis (strain ATCC 35984 / DSM 28319 / BCRC 17069 / CCUG 31568 / BM 3577 / RP62A).